The following is a 113-amino-acid chain: MTTDLKTRLTEINRQFGALGQAQPAAMSAFQGVMKAATQDGSLPAAVKELIAVALAVQKGCDDCVLFHTSQALRHRATREQLAEVLAINIEMGGGPGAMYASKALAYFDALNA.

The protein to H.influenzae HI_1053 and P.denitrificans COX locus Uncharacterized protein 4.

This is an uncharacterized protein from Cupriavidus necator (strain ATCC 17699 / DSM 428 / KCTC 22496 / NCIMB 10442 / H16 / Stanier 337) (Ralstonia eutropha).